The sequence spans 459 residues: Interleukin-7 receptor subunit alpha (459 aa).

The first 20 residues, 1–20 (MMALGRAFAIVFCLIQAVSG), serve as a signal peptide directing secretion. The Extracellular segment spans residues 21–239 (ESGNAQDGDL…PEPKNQGGWD (219 aa)). Cysteines 42 and 57 form a disulfide. An N-linked (GlcNAc...) asparagine glycan is attached at Asn-60. 2 cysteine pairs are disulfide-bonded: Cys-74/Cys-82 and Cys-108/Cys-118. Residues Asn-115 and Asn-177 are each glycosylated (N-linked (GlcNAc...) asparagine). A Fibronectin type-III domain is found at 131-232 (APSDLKVVYR…PSSTFETPEP (102 aa)). Positions 218 to 222 (WSEWS) match the WSXWS motif motif. A helical membrane pass occupies residues 240–264 (PVLPSVTILSLFSVFLLVILAHVLW). The Cytoplasmic segment spans residues 265–459 (KKRIKPVVWP…VTMSSFYQNK (195 aa)). The short motif at 272 to 280 (VWPSLPDHK) is the Box 1 motif element. The residue at position 282 (Thr-282) is a Phosphothreonine; by PKC. Disordered regions lie at residues 337–365 (TQGHRAAVHSANRSPETSVSPPETVRRES) and 378–413 (NAPPLLSSRSPDYRDGDRNRPPVYQDLLPNSGNTNV). The span at 347–357 (ANRSPETSVSP) shows a compositional bias: polar residues. The span at 388–397 (PDYRDGDRNR) shows a compositional bias: basic and acidic residues.

The protein belongs to the type I cytokine receptor family. Type 4 subfamily. As to quaternary structure, the IL7 receptor is a heterodimer of IL7R and IL2RG. The TSLP receptor is a heterodimer of CRLF2 and IL7R. Interacts with CD53. In terms of processing, N-glycosylated IL-7Ralpha binds IL7 300-fold more tightly than the unglycosylated form. Ubiquitinated by MARCHF8; leading to lysosomal degradation. As to expression, spleen, thymus and fetal liver.

The protein resides in the membrane. In terms of biological role, receptor for interleukin-7. Also acts as a receptor for thymic stromal lymphopoietin (TSLP). The polypeptide is Interleukin-7 receptor subunit alpha (Il7r) (Mus musculus (Mouse)).